Consider the following 313-residue polypeptide: Ribosomal RNA small subunit methyltransferase H (313 aa).

S-adenosyl-L-methionine-binding positions include 36–38 (GGH), Asp-56, Phe-80, Asp-102, and Gln-109.

It belongs to the methyltransferase superfamily. RsmH family.

Its subcellular location is the cytoplasm. The enzyme catalyses cytidine(1402) in 16S rRNA + S-adenosyl-L-methionine = N(4)-methylcytidine(1402) in 16S rRNA + S-adenosyl-L-homocysteine + H(+). In terms of biological role, specifically methylates the N4 position of cytidine in position 1402 (C1402) of 16S rRNA. The sequence is that of Ribosomal RNA small subunit methyltransferase H from Haemophilus ducreyi (strain 35000HP / ATCC 700724).